A 169-amino-acid chain; its full sequence is Ureidoglycolate lyase (169 aa).

This sequence belongs to the ureidoglycolate lyase family. Homodimer. It depends on Ni(2+) as a cofactor.

The catalysed reaction is (S)-ureidoglycolate = urea + glyoxylate. The protein operates within nitrogen metabolism; (S)-allantoin degradation. Its function is as follows. Catalyzes the catabolism of the allantoin degradation intermediate (S)-ureidoglycolate, generating urea and glyoxylate. Involved in the utilization of allantoin as nitrogen source. The polypeptide is Ureidoglycolate lyase (Pseudomonas paraeruginosa (strain DSM 24068 / PA7) (Pseudomonas aeruginosa (strain PA7))).